Here is a 326-residue protein sequence, read N- to C-terminus: Phenylalanine--tRNA ligase alpha subunit (326 aa).

Residue Glu251 participates in Mg(2+) binding.

The protein belongs to the class-II aminoacyl-tRNA synthetase family. Phe-tRNA synthetase alpha subunit type 1 subfamily. In terms of assembly, tetramer of two alpha and two beta subunits. Mg(2+) serves as cofactor.

It localises to the cytoplasm. It carries out the reaction tRNA(Phe) + L-phenylalanine + ATP = L-phenylalanyl-tRNA(Phe) + AMP + diphosphate + H(+). The sequence is that of Phenylalanine--tRNA ligase alpha subunit from Pseudoalteromonas atlantica (strain T6c / ATCC BAA-1087).